We begin with the raw amino-acid sequence, 104 residues long: Ribonuclease P protein component 4 (104 aa).

Residues cysteine 57, cysteine 60, cysteine 83, and cysteine 86 each coordinate Zn(2+).

It belongs to the eukaryotic/archaeal RNase P protein component 4 family. Consists of a catalytic RNA component and at least 4-5 protein subunits. It depends on Zn(2+) as a cofactor.

The protein resides in the cytoplasm. The enzyme catalyses Endonucleolytic cleavage of RNA, removing 5'-extranucleotides from tRNA precursor.. Part of ribonuclease P, a protein complex that generates mature tRNA molecules by cleaving their 5'-ends. This Saccharolobus islandicus (strain L.S.2.15 / Lassen #1) (Sulfolobus islandicus) protein is Ribonuclease P protein component 4.